We begin with the raw amino-acid sequence, 318 residues long: Biotin synthase (318 aa).

The 227-residue stretch at 46–272 (DGVDVEQLNN…RSVVKISGGR (227 aa)) folds into the Radical SAM core domain. The [4Fe-4S] cluster site is built by C61, C65, and C68. Positions 105, 138, 197, and 267 each coordinate [2Fe-2S] cluster.

The protein belongs to the radical SAM superfamily. Biotin synthase family. In terms of assembly, homodimer. Requires [4Fe-4S] cluster as cofactor. It depends on [2Fe-2S] cluster as a cofactor.

The enzyme catalyses (4R,5S)-dethiobiotin + (sulfur carrier)-SH + 2 reduced [2Fe-2S]-[ferredoxin] + 2 S-adenosyl-L-methionine = (sulfur carrier)-H + biotin + 2 5'-deoxyadenosine + 2 L-methionine + 2 oxidized [2Fe-2S]-[ferredoxin]. It functions in the pathway cofactor biosynthesis; biotin biosynthesis; biotin from 7,8-diaminononanoate: step 2/2. In terms of biological role, catalyzes the conversion of dethiobiotin (DTB) to biotin by the insertion of a sulfur atom into dethiobiotin via a radical-based mechanism. The protein is Biotin synthase of Cenarchaeum symbiosum (strain A).